The following is a 90-amino-acid chain: U7-theraphotoxin-Hhn1c (90 aa).

An N-terminal signal peptide occupies residues Met-1 to Ser-19. Residues Phe-20 to Glu-50 constitute a propeptide that is removed on maturation. 3 disulfides stabilise this stretch: Cys-51–Cys-65, Cys-58–Cys-70, and Cys-64–Cys-81.

The protein belongs to the neurotoxin 10 (Hwtx-1) family. 13 (Hntx-13) subfamily. As to expression, expressed by the venom gland.

It is found in the secreted. Its function is as follows. Ion channel inhibitor. The polypeptide is U7-theraphotoxin-Hhn1c (Cyriopagopus hainanus (Chinese bird spider)).